The chain runs to 136 residues: MIKFLLFLAIAAATVISNAELAVPTASISAHVLDISGGSPAGGIQILAFILLNNGWTNIGSQFTQDNGRVDWVSPDFTLIPGTYRLVYITEPYYTAKNVESFYPYVEVVFNIRNATQHYHVPLTLSPWGYSTYRGS.

A signal peptide spans 1 to 19; the sequence is MIKFLLFLAIAAATVISNA. 3 residues coordinate substrate: histidine 31, arginine 69, and tyrosine 133.

The protein belongs to the transthyretin family. 5-hydroxyisourate hydrolase subfamily. Homotetramer.

It catalyses the reaction 5-hydroxyisourate + H2O = 5-hydroxy-2-oxo-4-ureido-2,5-dihydro-1H-imidazole-5-carboxylate + H(+). Catalyzes the hydrolysis of 5-hydroxyisourate (HIU) to 2-oxo-4-hydroxy-4-carboxy-5-ureidoimidazoline (OHCU). This is Probable 5-hydroxyisourate hydrolase ZK697.8 from Caenorhabditis elegans.